A 510-amino-acid polypeptide reads, in one-letter code: Ribose import ATP-binding protein RbsA 1 (510 aa).

ABC transporter domains are found at residues 20–256 (LEMR…VGRD) and 266–510 (VTLG…TGNA). ATP is bound at residue 52–59 (GENGAGKS).

This sequence belongs to the ABC transporter superfamily. Ribose importer (TC 3.A.1.2.1) family. The complex is composed of an ATP-binding protein (RbsA), two transmembrane proteins (RbsC) and a solute-binding protein (RbsB).

The protein resides in the cell inner membrane. It carries out the reaction D-ribose(out) + ATP + H2O = D-ribose(in) + ADP + phosphate + H(+). Functionally, part of the ABC transporter complex RbsABC involved in ribose import. Responsible for energy coupling to the transport system. The protein is Ribose import ATP-binding protein RbsA 1 of Agrobacterium fabrum (strain C58 / ATCC 33970) (Agrobacterium tumefaciens (strain C58)).